Consider the following 771-residue polypeptide: Polymeric immunoglobulin receptor (771 aa).

An N-terminal signal peptide occupies residues 1–18; the sequence is MRLYLFTLLVTVFSGVST. Residues 19–645 are Extracellular-facing; the sequence is KSPIFGPQEV…DGQSRSSSSK (627 aa). The Ig-like V-type 1; required for binding to polymeric IgA and IgM domain maps to 21–120; that stretch reads PIFGPQEVSS…GLGTSNRGLS (100 aa). Cysteines 40 and 110 form a disulfide. N-linked (GlcNAc...) asparagine glycans are attached at residues asparagine 90, asparagine 147, asparagine 170, and asparagine 206. 4 Ig-like V-type domains span residues 135–237, 245–351, 352–457, and 463–563; these read SDTH…DLQV, LYKD…ESTI, PNRR…LQVA, and PNLE…IYIA. 3 disulfides stabilise this stretch: cysteine 152–cysteine 220, cysteine 257–cysteine 324, and cysteine 370–cysteine 440. N-linked (GlcNAc...) asparagine glycans are attached at residues asparagine 420 and asparagine 471. Cysteine 484 and cysteine 546 are disulfide-bonded. The segment at 622–641 is disordered; the sequence is QAQENRASGDAGSADGQSRS. The span at 627 to 641 shows a compositional bias: low complexity; that stretch reads RASGDAGSADGQSRS. Residues 646-668 form a helical membrane-spanning segment; sequence VLFSTLVPLGLVLAVGAIAVWVA. Over 669 to 771 the chain is Cytoplasmic; the sequence is RVRHRKNVDR…AQVHDGPQEA (103 aa). 4 positions are modified to phosphoserine: serine 680, serine 689, serine 696, and serine 742.

Interacts (mainly via CDR1-like domain) with dimeric IgA. Interacts (mainly via CDR2-like domain) with pentameric IgM. In terms of assembly, either free or part of the secretory IgA (sIgA) complex that consists of two, four or five IgA monomers, and two additional non-Ig polypeptides, namely the JCHAIN and the secretory component (the proteolytic product of PIGR). Free secretory component interacts with bacterial antigens toxA of C.difficile and eae of E.coli. In terms of processing, N-glycosylated. N-glycosylation is required for anchoring IgA molecules to mucus, but is not necessary for Ig binding.

It localises to the cell membrane. It is found in the secreted. In terms of biological role, mediates selective transcytosis of polymeric IgA and IgM across mucosal epithelial cells. Binds polymeric IgA and IgM at the basolateral surface of epithelial cells. The complex is then transported across the cell to be secreted at the apical surface. During this process, a cleavage occurs that separates the extracellular (known as the secretory component) from the transmembrane segment. Functionally, through its N-linked glycans ensures anchoring of secretory IgA (sIgA) molecules to mucus lining the epithelial surface to neutralize extracellular pathogens. On its own (free form) may act as a non-specific microbial scavenger to prevent pathogen interaction with epithelial cells. This chain is Polymeric immunoglobulin receptor (Pigr), found in Mus musculus (Mouse).